Consider the following 279-residue polypeptide: Isopentenyl-diphosphate delta-isomerase idi1 (279 aa).

Lys-78 serves as a coordination point for substrate. Residues His-82 and His-93 each coordinate Mg(2+). Positions 91–249 (LLHRAFSVFL…GLKFTPWFKL (159 aa)) constitute a Nudix hydrolase domain. Substrate is bound by residues Gln-111 and Lys-116. The active site involves Cys-128. Ser-129 contributes to the substrate binding site. The short motif at 129–162 (SHPLGIPGETGAELDAAVLGVKRAAQRKLDQELG) is the Nudix box element. Mg(2+) is bound by residues Glu-191 and Glu-193. The active site involves Glu-193.

It belongs to the IPP isomerase type 1 family. Mg(2+) serves as cofactor.

The enzyme catalyses isopentenyl diphosphate = dimethylallyl diphosphate. It functions in the pathway isoprenoid biosynthesis; dimethylallyl diphosphate biosynthesis; dimethylallyl diphosphate from isopentenyl diphosphate: step 1/1. Functionally, isopentenyl-diphosphate delta-isomerase; part of the second module of ergosterol biosynthesis pathway that includes the middle steps of the pathway. Idi1 catalyzes the 1,3-allylic rearrangement of isopentenyl (IPP) to its highly electrophilic allylic isomer, dimethylallyl diphosphate (DMAPP). The second module is carried out in the vacuole and involves the formation of farnesyl diphosphate, which is also an important intermediate in the biosynthesis of ubiquinone, dolichol, heme and prenylated proteins. Activity by the mevalonate kinase erg12 (AFUA_4G07780) first converts mevalonate into 5-phosphomevalonate. 5-phosphomevalonate is then further converted to 5-diphosphomevalonate by the phosphomevalonate kinase erg8 (AFUA_5G10680). The diphosphomevalonate decarboxylase mvd1 (AFUA_4G07130) then produces isopentenyl diphosphate. The isopentenyl-diphosphate delta-isomerase idi1 (AFUA_6G11160) then catalyzes the 1,3-allylic rearrangement of the homoallylic substrate isopentenyl (IPP) to its highly electrophilic allylic isomer, dimethylallyl diphosphate (DMAPP). Finally the farnesyl diphosphate synthase erg20 (AFUA_5G02450) catalyzes the sequential condensation of isopentenyl pyrophosphate with dimethylallyl pyrophosphate, and then with the resultant geranylpyrophosphate to the ultimate product farnesyl pyrophosphate. The chain is Isopentenyl-diphosphate delta-isomerase idi1 from Aspergillus fumigatus (strain ATCC MYA-4609 / CBS 101355 / FGSC A1100 / Af293) (Neosartorya fumigata).